The chain runs to 245 residues: Phycocyanobilin:ferredoxin oxidoreductase (245 aa).

It belongs to the HY2 family.

It carries out the reaction (2R,3Z)-phycocyanobilin + 4 oxidized [2Fe-2S]-[ferredoxin] = biliverdin IXalpha + 4 reduced [2Fe-2S]-[ferredoxin] + 4 H(+). In terms of biological role, catalyzes the four-electron reduction of biliverdin IX-alpha (2-electron reduction at both the A and D rings); the reaction proceeds via an isolatable 2-electron intermediate, 181,182-dihydrobiliverdin. This chain is Phycocyanobilin:ferredoxin oxidoreductase, found in Trichodesmium erythraeum (strain IMS101).